The primary structure comprises 425 residues: Adenylosuccinate synthetase (425 aa).

Residues 12–18 and 40–42 contribute to the GTP site; these read GDEGKGK and GHT. Catalysis depends on Asp-13, which acts as the Proton acceptor. Mg(2+) contacts are provided by Asp-13 and Gly-40. Residues 13–16, 38–41, Thr-130, Arg-144, Gln-224, Thr-239, and Arg-301 each bind IMP; these read DEGK and NAGH. The active-site Proton donor is the His-41. A substrate-binding site is contributed by 297-303; that stretch reads TVSNRRR. Residues Arg-303, 329–331, and 411–413 each bind GTP; these read KLD and STS.

This sequence belongs to the adenylosuccinate synthetase family. In terms of assembly, homodimer. The cofactor is Mg(2+).

The protein localises to the cytoplasm. The enzyme catalyses IMP + L-aspartate + GTP = N(6)-(1,2-dicarboxyethyl)-AMP + GDP + phosphate + 2 H(+). The protein operates within purine metabolism; AMP biosynthesis via de novo pathway; AMP from IMP: step 1/2. In terms of biological role, plays an important role in the de novo pathway of purine nucleotide biosynthesis. Catalyzes the first committed step in the biosynthesis of AMP from IMP. This is Adenylosuccinate synthetase from Wolbachia pipientis wMel.